The following is a 161-amino-acid chain: Phosphopantetheine adenylyltransferase (161 aa).

A substrate-binding site is contributed by Thr9. Residues 9–10 (TF) and His17 contribute to the ATP site. 3 residues coordinate substrate: Lys41, Leu73, and Arg87. Residues 88-90 (GLR), Glu98, and 123-129 (YQFISGT) each bind ATP.

This sequence belongs to the bacterial CoaD family. Homohexamer. Mg(2+) is required as a cofactor.

Its subcellular location is the cytoplasm. The enzyme catalyses (R)-4'-phosphopantetheine + ATP + H(+) = 3'-dephospho-CoA + diphosphate. Its pathway is cofactor biosynthesis; coenzyme A biosynthesis; CoA from (R)-pantothenate: step 4/5. In terms of biological role, reversibly transfers an adenylyl group from ATP to 4'-phosphopantetheine, yielding dephospho-CoA (dPCoA) and pyrophosphate. The protein is Phosphopantetheine adenylyltransferase of Janthinobacterium sp. (strain Marseille) (Minibacterium massiliensis).